The sequence spans 422 residues: MMFEFLSLLCSGFFLVQRMSAHMGSYDKPFLCASPSYIVPQGQNVTLICDSHSKPNIFKVYKEDGFPILQLHEKTFTKSLDIGPVTPEYAGTYRCFHHQYPNEISAHSEPLKIIISGIYMKPFLIAPQTPLANSGENVTLECHSEIMFDTYILTSHRMEILKETLQHFQESHFSGSYASFTIGPMTPDHSGTYTCYGAYNHSLYEWSDSSDPVDIKITGEYKKPSLSSVMSPVLVSEQNMTLSCISNHQFEMFHLSREGVPQGKGIPAMQSHSGKFEAKFLLSPVIQKGNYRCYGSFKNSSHVWSSPSDPLYLPAKDNLKNLHIQIGLLVTMVLVIVVIIIIIIIIIIIIYYYYFSKKSSILEQESEVKATINRQDPERQEEHKVTYIEFEQRIFNKNLMPPISQSPKEFSIDTVVYTEVMI.

The first 21 residues, 1-21 (MMFEFLSLLCSGFFLVQRMSA), serve as a signal peptide directing secretion. The Extracellular portion of the chain corresponds to 22 to 329 (HMGSYDKPFL…KNLHIQIGLL (308 aa)). Ig-like C2-type domains follow at residues 42–100 (GQNV…HHQY), 135–202 (GENV…YNHS), and 237–300 (EQNM…FKNS). N-linked (GlcNAc...) asparagine glycosylation is present at Asn44. A disulfide bond links Cys49 and Cys95. Asn137 is a glycosylation site (N-linked (GlcNAc...) asparagine). Cysteines 142 and 195 form a disulfide. N-linked (GlcNAc...) asparagine glycans are attached at residues Asn200 and Asn239. A disulfide bridge links Cys244 with Cys293. A glycan (N-linked (GlcNAc...) asparagine) is linked at Asn299. A helical membrane pass occupies residues 330-350 (VTMVLVIVVIIIIIIIIIIII). At 351-422 (YYYYFSKKSS…DTVVYTEVMI (72 aa)) the chain is on the cytoplasmic side.

This sequence belongs to the immunoglobulin superfamily.

It localises to the cell membrane. Receptor on natural killer (NK) cells. Inhibits the activity of NK cells thus preventing cell lysis. This Rattus norvegicus (Rat) protein is Killer cell immunoglobulin-like receptor 3DL1 (Kir3dl1).